The chain runs to 85 residues: Phycobilisome 9.7 kDa linker polypeptide, phycocyanin-associated, rod (85 aa).

The region spanning 16–74 is the CpcD-like domain; sequence NRVFVYEVEGLRQNEQTDNNRYQIRNSSTIEIQVPYSRMNEEDRRITRLGGRIVNIRPA.

The protein belongs to the phycobilisome linker protein family.

It localises to the cellular thylakoid membrane. Its function is as follows. Rod linker protein, associated with phycocyanin. Linker polypeptides determine the state of aggregation and the location of the disk-shaped phycobiliprotein units within the phycobilisome and modulate their spectroscopic properties in order to mediate a directed and optimal energy transfer. In Microchaete diplosiphon (Fremyella diplosiphon), this protein is Phycobilisome 9.7 kDa linker polypeptide, phycocyanin-associated, rod (cpcD2).